Here is a 139-residue protein sequence, read N- to C-terminus: Peptide methionine sulfoxide reductase MsrB (139 aa).

The MsrB domain occupies 9-131 (TPSDNTEMTE…NSASLSFIDD (123 aa)). Cys-48, Cys-51, Cys-97, and Cys-100 together coordinate Zn(2+). Residue Cys-120 is the Nucleophile of the active site.

This sequence belongs to the MsrB Met sulfoxide reductase family. Zn(2+) serves as cofactor.

It carries out the reaction L-methionyl-[protein] + [thioredoxin]-disulfide + H2O = L-methionyl-(R)-S-oxide-[protein] + [thioredoxin]-dithiol. This is Peptide methionine sulfoxide reductase MsrB from Pectobacterium atrosepticum (strain SCRI 1043 / ATCC BAA-672) (Erwinia carotovora subsp. atroseptica).